A 272-amino-acid chain; its full sequence is 2-succinyl-6-hydroxy-2,4-cyclohexadiene-1-carboxylate synthase (272 aa).

The protein belongs to the AB hydrolase superfamily. MenH family. In terms of assembly, monomer.

It catalyses the reaction 5-enolpyruvoyl-6-hydroxy-2-succinyl-cyclohex-3-ene-1-carboxylate = (1R,6R)-6-hydroxy-2-succinyl-cyclohexa-2,4-diene-1-carboxylate + pyruvate. The protein operates within quinol/quinone metabolism; 1,4-dihydroxy-2-naphthoate biosynthesis; 1,4-dihydroxy-2-naphthoate from chorismate: step 3/7. It functions in the pathway quinol/quinone metabolism; menaquinone biosynthesis. In terms of biological role, catalyzes a proton abstraction reaction that results in 2,5-elimination of pyruvate from 2-succinyl-5-enolpyruvyl-6-hydroxy-3-cyclohexene-1-carboxylate (SEPHCHC) and the formation of 2-succinyl-6-hydroxy-2,4-cyclohexadiene-1-carboxylate (SHCHC). This is 2-succinyl-6-hydroxy-2,4-cyclohexadiene-1-carboxylate synthase from Yersinia pseudotuberculosis serotype I (strain IP32953).